The following is a 588-amino-acid chain: MGSTPTDLPGEDVADNRSGVGGGISDVYGEDSATLDQLVTPWVTSVASGYTLMRDPRYNKGLAFTDKERDAHYLTGLLPPVILSQDVQERKVMHNLRQYTVPLQRYMALMDLQERNERLFYKLLIDNVEELLPVVYTPTVGEACQKYGSIFRKPQGLYISLNEKGKILEVLKNWPQRGIQVIVVTDGERILGLGDLGCQGMGIPVGKLSLYTALGGIRPSACLPITIDVGTNNEKLLNDEFYIGLKQRRATGQEYAEFLHEFMCAVKQNYGEKVLVQFEDFANHNAFDLLSKYSDSHLVFNDDIQGTASVVLAGLIAAQKVLGKKLADHTFLFLGAGEAGTGIAELIALKISKETGAPITETRKKIWLVDSKGLIVSSRKESLQHFKQPWAHEHKPVKDLIGAVNAIKPTVLIGTSGVGQTFTKEVVEAMATNNEKPLILALSNPTSQAECTAEQAYTWTKGRAIFGSGSPFDPVVYDGKTYLPGQANNCYIFPGLGLGLIMSGAIRVRDDMLLAASEALAAQVTEEHYANGLIYPPFSNIREISANIAACVAAKTYDLGLASNLPRAKDLVKFAESSMYSPVYRNYR.

Residues 1–21 form a disordered region; sequence MGSTPTDLPGEDVADNRSGVG. Residue Gly2 is modified to N-acetylglycine. Tyr136 (proton donor) is an active-site residue. Residue Arg189 participates in NADP(+) binding. Lys207 acts as the Proton acceptor in catalysis. Residues Glu279, Asp280, and Asp303 each contribute to the a divalent metal cation site. NADP(+) is bound by residues Asp303, 332 to 348, and Asn444; that span reads LFLGAGEAGTGIAELIA.

It belongs to the malic enzymes family. In terms of assembly, homohexamers and homooctamers. It depends on Mg(2+) as a cofactor. Requires Mn(2+) as cofactor. In terms of tissue distribution, expressed in leaves, stems, flowers and roots. Particularly present in vasculatures, trichome basal cells and hydatodes.

The protein localises to the cytoplasm. It catalyses the reaction (S)-malate + NADP(+) = pyruvate + CO2 + NADPH. It carries out the reaction oxaloacetate + H(+) = pyruvate + CO2. Activated by coenzyme A (CoA), aspartate, succinate and fumarate. Repressed by oxaloacetate, glucose and ATP. This chain is NADP-dependent malic enzyme 2 (NADP-ME2), found in Arabidopsis thaliana (Mouse-ear cress).